The following is a 258-amino-acid chain: Glutamate racemase (258 aa).

Substrate is bound by residues 11 to 12 and 43 to 44; these read DS and YG. Residue C74 is the Proton donor/acceptor of the active site. 75–76 provides a ligand contact to substrate; that stretch reads NT. C187 (proton donor/acceptor) is an active-site residue. 188–189 contacts substrate; that stretch reads TH.

The protein belongs to the aspartate/glutamate racemases family.

It catalyses the reaction L-glutamate = D-glutamate. The protein operates within cell wall biogenesis; peptidoglycan biosynthesis. Functionally, provides the (R)-glutamate required for cell wall biosynthesis. This chain is Glutamate racemase, found in Bifidobacterium animalis subsp. lactis (strain AD011).